The chain runs to 202 residues: Guanylate kinase (202 aa).

In terms of domain architecture, Guanylate kinase-like spans 3 to 181; that stretch reads GNLFVVAAPS…ALDDLRAVVR (179 aa). An ATP-binding site is contributed by 10–17; sequence APSGAGKT.

The protein belongs to the guanylate kinase family.

Its subcellular location is the cytoplasm. It carries out the reaction GMP + ATP = GDP + ADP. Essential for recycling GMP and indirectly, cGMP. This chain is Guanylate kinase, found in Dechloromonas aromatica (strain RCB).